Reading from the N-terminus, the 1396-residue chain is MSEQEKGKGDLDDPNSKNTKCPDKFEQKVEEYLEVLNELHLTGRTSGFCMRNFTVEGAFNPKFQIRSFFAQLLHPINIIFRTGPKRDIIPLVKGFDGYLQPGSSLLVLGHEGSGGSTLLKALCGIVEENERLNGSLHYDGLDYKIAHSQFKADLSYCGEGHSKVATITVRRLLEFVCSCRLPASKYDHPRSHYIRRICEIIRDAFDLGDFYNHRILRVFNSGDQIKVDVAQTMCARPLIQCWDNNMRDFDSISVIDILSRIKVLSHKLGTTLVAIVSQASDRIFHMFDMVTLMYEGEQIFYGPTSRLKPYFLDLGFIPAKHSTTVEFVTSLTYPEMRIINKKHQGFIPSTPAEFRECWLRSEDYAKLIKFMDRYEENHSDIHAFKDAKFDQTRLQKFLRWLNSNPCLIPYRLQVFATAKVTFFQYLHDYSYIATFVFTYVFQALMLGSLFYNLRNESSELYSRGSVLSNAIVFTAIQTMSEVDIIFLKKSLFKEHRVQSLYHPSAALMGSSLVEFPMRIVVVTMYDIIVYFLSDLKRNARSFFIFYLFTIVITFCMSAVFRFIALLSTTAEIAALIGGIGALVLIIFCGAVMPVQYIGWWFRWIAYANPVNYGYESIMLNEFDGREIPCSLMAPAPDTAPIENNFCLATAGRTGTSIVSGYQYLQVVYQYKADFLWRNCGIILGFAIFILASSLILANFIRYDRESVHIPEFQKRKSYSQVASSFLIEPQDKPPSQTEPDNKKVDVSTTLSTNDNLVLCWRDLNFTVVTKTSKKQILTNVSGYLKKNTLTALLGENKSGKSVLLRILSQRGIAGSVEGEITLSGLKNPKNLRKRIGYVRKNPLFISEYTVRETLRLHAALRQSKQRSLSEQYAYVEYVIDFLGLGEVADFIVGDMGKGLSLYHKRLLSIAVELSARPGSILLLDEPANGLDSQSAWMLVCILQKLARSGLSILCSVSQPSSRILELFDMMLILDLNGNTVYYDTMGRDLSKLVNYFKRIHGTNEHSKDTADFVLHCIQFLKQGPEFDYAGAWASTNTHKQIIEHVNFIMDNPELTDDDFPNETRFMTSFFFQIYKISMRNFVAYWRDSSLLRARVAFNIVAGLIIGFSFYKQGVGVEETQNKMFSAYMLTVASTSTMNGLQPKFIYFRSIYEQYEQNTAIYSRTAFIIAFFLVEAVINCCFATLFFFGWYYPSGFYEFNHNIPFYGGFAWLMLMIFTLYYTTLGIGIATISPSIGTASIISGTAFVFIQYFNGMIQLPGVIVGFWKWMDALSPYKYFLEGMIGGVLHDAPITCEKFEIHYVDPPPNYSCGEYFSSFLNSSGHGIVYNPEAYSSCQYCPYKNADELMVGFGYHYNHKWRNFCIMIGYTAFNLGAAIALYYIIHKTPWKRLAARFVPD.

Residues Met1–Pro22 are disordered. The region spanning Leu73–Lys320 is the ABC transporter 1 domain. Residues Leu412–Phe622 form the ABC transmembrane type-2 1 domain. 6 consecutive transmembrane segments (helical) span residues Tyr431–Tyr451, Val466–Phe486, Leu512–Leu532, Phe543–Ile563, Ile572–Met592, and Gly680–Ile700. In terms of domain architecture, ABC transporter 2 spans Leu758–Gly1001. Gly794 to Ser801 lines the ATP pocket. Residues Phe1071 to Leu1286 form the ABC transmembrane type-2 2 domain. A run of 5 helical transmembrane segments spans residues Val1095 to Gly1115, Phe1166 to Phe1186, Phe1208 to Ala1228, Phe1245 to Trp1265, and Cys1361 to Ile1381.

The protein belongs to the ABC transporter superfamily. ABCG family. PDR (TC 3.A.1.205) subfamily.

It is found in the endoplasmic reticulum membrane. The polypeptide is ATP-binding cassette transporter pdr1 (pdr1) (Schizosaccharomyces pombe (strain 972 / ATCC 24843) (Fission yeast)).